Reading from the N-terminus, the 465-residue chain is ATP synthase subunit beta (465 aa).

ATP is bound at residue 152-159; that stretch reads GGAGVGKT.

It belongs to the ATPase alpha/beta chains family. As to quaternary structure, F-type ATPases have 2 components, CF(1) - the catalytic core - and CF(0) - the membrane proton channel. CF(1) has five subunits: alpha(3), beta(3), gamma(1), delta(1), epsilon(1). CF(0) has three main subunits: a(1), b(2) and c(9-12). The alpha and beta chains form an alternating ring which encloses part of the gamma chain. CF(1) is attached to CF(0) by a central stalk formed by the gamma and epsilon chains, while a peripheral stalk is formed by the delta and b chains.

Its subcellular location is the cell inner membrane. The enzyme catalyses ATP + H2O + 4 H(+)(in) = ADP + phosphate + 5 H(+)(out). Produces ATP from ADP in the presence of a proton gradient across the membrane. The catalytic sites are hosted primarily by the beta subunits. The sequence is that of ATP synthase subunit beta from Campylobacter fetus subsp. fetus (strain 82-40).